We begin with the raw amino-acid sequence, 213 residues long: MSADTRFESLKAIVPAVSRETANRLIAFEDLFRKWSKAINLASPSTLNELWTRHILDSAQLFPLASDAKHWLDIGSGGGFPGIVTACFLAEQPGGAIDLIESAGKKAAFLRTAAGHLHVPARVHSTRIEAMWEKIETPQVVTARALASLNDLFGLTELWLTNGAKALFQKGRDYQREIDESRVGWSFDLVQHQSAIDQASVILEITNLRRKVA.

S-adenosyl-L-methionine-binding positions include Gly-75, Phe-80, 128 to 129 (IE), and Arg-144.

The protein belongs to the methyltransferase superfamily. RNA methyltransferase RsmG family.

Its subcellular location is the cytoplasm. The enzyme catalyses guanosine(527) in 16S rRNA + S-adenosyl-L-methionine = N(7)-methylguanosine(527) in 16S rRNA + S-adenosyl-L-homocysteine. In terms of biological role, specifically methylates the N7 position of guanine in position 527 of 16S rRNA. In Brucella anthropi (strain ATCC 49188 / DSM 6882 / CCUG 24695 / JCM 21032 / LMG 3331 / NBRC 15819 / NCTC 12168 / Alc 37) (Ochrobactrum anthropi), this protein is Ribosomal RNA small subunit methyltransferase G.